The following is a 256-amino-acid chain: Thiazole synthase (256 aa).

Catalysis depends on K96, which acts as the Schiff-base intermediate with DXP. 1-deoxy-D-xylulose 5-phosphate-binding positions include G157, 184–185, and 206–207; these read AG and NT.

Belongs to the ThiG family. In terms of assembly, homotetramer. Forms heterodimers with either ThiH or ThiS.

The protein localises to the cytoplasm. It carries out the reaction [ThiS sulfur-carrier protein]-C-terminal-Gly-aminoethanethioate + 2-iminoacetate + 1-deoxy-D-xylulose 5-phosphate = [ThiS sulfur-carrier protein]-C-terminal Gly-Gly + 2-[(2R,5Z)-2-carboxy-4-methylthiazol-5(2H)-ylidene]ethyl phosphate + 2 H2O + H(+). Its pathway is cofactor biosynthesis; thiamine diphosphate biosynthesis. Its function is as follows. Catalyzes the rearrangement of 1-deoxy-D-xylulose 5-phosphate (DXP) to produce the thiazole phosphate moiety of thiamine. Sulfur is provided by the thiocarboxylate moiety of the carrier protein ThiS. In vitro, sulfur can be provided by H(2)S. The chain is Thiazole synthase from Brucella melitensis biotype 2 (strain ATCC 23457).